The following is a 321-amino-acid chain: Ras association domain-containing protein 4 (321 aa).

The interval 79–159 (HLPSTSWMPR…RPKCRAPGEA (81 aa)) is disordered. The span at 98–110 (SPQNGNITAQGPS) shows a compositional bias: polar residues. Serine 141 carries the post-translational modification Phosphoserine. One can recognise a Ras-associating domain in the interval 174–262 (YNHKTSVFTP…ARIFLMEADL (89 aa)). The region spanning 270–317 (VAQYIKFEMPVLDSFVEKLKEEEEREIIKLTMKFQALRLTMLQRLEQL) is the SARAH domain.

In terms of assembly, interacts directly with activated KRAS in a GTP-dependent manner. In terms of tissue distribution, widely expressed. Frequently down-regulated in tumor cell lines.

Functionally, potential tumor suppressor. May act as a KRAS effector protein. May promote apoptosis and cell cycle arrest. The protein is Ras association domain-containing protein 4 (RASSF4) of Homo sapiens (Human).